We begin with the raw amino-acid sequence, 542 residues long: Multidrug transporter DTR1 (542 aa).

2 N-linked (GlcNAc...) asparagine glycosylation sites follow: Asn6 and Asn46. A helical membrane pass occupies residues 80 to 100 (LIFLIVIYNGFLGPLAGNVFI). N-linked (GlcNAc...) asparagine glycans are attached at residues Asn111 and Asn118. Helical transmembrane passes span 119 to 139 (ATVS…GALA), 146 to 166 (ILYI…ASVP), 169 to 189 (IGSL…VISL), 210 to 230 (FMLG…LILL), and 237 to 257 (WLFG…ILLL). An N-linked (GlcNAc...) asparagine glycan is attached at Asn274. The next 4 helical transmembrane spans lie at 332 to 352 (IMTF…FCTY), 374 to 394 (IGAC…IGGH), 419 to 439 (ILTV…GWCI), and 441 to 461 (FHYH…GLTW). An N-linked (GlcNAc...) asparagine glycan is attached at Asn463. The next 2 helical transmembrane spans lie at 481 to 501 (AIAV…ALIA) and 511 to 531 (FCFL…LVLI).

Belongs to the major facilitator superfamily. CAR1 family.

It localises to the cell membrane. In terms of biological role, plasma membrane acetic acid exporter, relieving the stress induced upon cells within hemocytes, and thus enabling increased proliferation and virulence against Galleria mellonella larvae. Confers resistance to weak acid and oxidative stress, but not to antifungal drugs. This Candida glabrata (strain ATCC 2001 / BCRC 20586 / JCM 3761 / NBRC 0622 / NRRL Y-65 / CBS 138) (Yeast) protein is Multidrug transporter DTR1.